The primary structure comprises 1064 residues: MARLFSPRPPPSEDLFYETYYSLSQQYPLLILLLVIVLCAIVALPAVAWASGRELTSDPSFLTTVLCALGGFSLLLGLASREQQLQRWTRPLSGLIWAALLALGYGFLFTGGVVSAWDQVSFFLFIIFTVYAMLPLGMRDAAAAGVISSLSHLLVLGLYLGWRPESQRDLLPQLAANAVLFLCGNVVGAYHKALMERALRATFREALSSLHSRRRLDTEKKHQEHLLLSILPAYLAREMKAEIMARLQAGQSSRPENTNNFHSLYVKRHQGVSVLYADIVGFTRLASECSPKELVLMLNELFGKFDQIAKEHECMRIKILGDCYYCVSGLPLSLPDHAINCVRMGLDMCRAIRKLRVATGVDINMRVGVHSGSVLCGVIGLQKWQYDVWSHDVTLANHMEAGGVPGRVHITGATLALLAGAYAVERADMEHRDPYLRELGEPTYLVIDPWAEEEDEKGTERGLLSSLEGHTMRPSLLMTRYLESWGAAKPFAHLSHVDSPASTSTPLPEKAFSPQWSLDRSRTPRGLHDELDTGDAKFFQVIEQLNSQKQWKQSKDFNLLTLYFREKEMEKQYRLSALPAFKYYAACTFLVFLSNFTIQMLVTTRPPALATTYSITFLLFLLLLFVCFSEHLTKCVQKGPKMLHWLPALSVLVATRPGLRVALGTATILLVFTMAVVSLLFLPVSSDCPFLAPNVSSVAFNTSWELPASLPLISIPYSMHCCVLGFLSCSLFLHMSFELKLLLLLLWLVASCSLFLHSHAWLSDCLIARLYQGSLGSRPGVLKEPKLMGAIYFFIFFFTLLVLARQNEYYCRLDFLWKKKLRQEREETETMENVLPAHVAPQLIGQNRRNEDLYHQSYECVCVLFASIPDFKEFYSESNINHEGLECLRLLNEIIADFDELLSKPKFSGVEKIKTIGSTYMAATGLNATPGQDTQQDAERSCSHLGTMVEFAVALGSKLGVINKHSFNNFRLRVGLNHGPVVAGVIGAQKPQYDIWGNTVNVASRMESTGVLGKIQVTEETARALQSLGYTCYSRGVIKVKGKGQLCTYFLNTDLTRTGSPSAS.

The Cytoplasmic segment spans residues 1 to 28 (MARLFSPRPPPSEDLFYETYYSLSQQYP). Transmembrane regions (helical) follow at residues 29–50 (LLIL…VAWA), 61–80 (FLTT…GLAS), 94–117 (GLIW…VSAW), 120–138 (VSFF…PLGM), 141–162 (AAAA…YLGW), and 170–190 (LLPQ…VGAY). Over 191-582 (HKALMERALR…YRLSALPAFK (392 aa)) the chain is Cytoplasmic. Mg(2+)-binding residues include Asp278, Ile279, and Asp322. Residues 278–283 (DIVGFT), 320–322 (LGD), and Arg366 contribute to the ATP site. Residues 498 to 523 (DSPASTSTPLPEKAFSPQWSLDRSRT) form a disordered region. The residue at position 517 (Ser517) is a Phosphoserine. Thr533 is modified (phosphothreonine). Helical transmembrane passes span 583–604 (YYAA…LVTT), 608–630 (ALAT…CFSE), and 661–684 (VALG…FLPV). Residues 685 to 707 (SSDCPFLAPNVSSVAFNTSWELP) are Extracellular-facing. Asn694 and Asn701 each carry an N-linked (GlcNAc...) asparagine glycan. 3 helical membrane-spanning segments follow: residues 708–733 (ASLP…SLFL), 741–761 (LLLL…SHAW), and 788–804 (MGAI…LVLA). Topologically, residues 805 to 1064 (RQNEYYCRLD…LTRTGSPSAS (260 aa)) are cytoplasmic. Residues Lys914, 994–996 (DIW), 1001–1005 (NVASR), and Lys1041 contribute to the ATP site.

It belongs to the adenylyl cyclase class-4/guanylyl cyclase family. The cofactor is Mg(2+). Requires Mn(2+) as cofactor. Widely distributed.

It is found in the cell membrane. Its subcellular location is the cytoplasm. It carries out the reaction ATP = 3',5'-cyclic AMP + diphosphate. With respect to regulation, activated by forskolin. Insensitive to calcium/calmodulin. Stimulated by GNAS and by the G-protein beta and gamma subunit complex. Catalyzes the formation of the signaling molecule cAMP in response to G-protein signaling. The sequence is that of Adenylate cyclase type 4 (Adcy4) from Rattus norvegicus (Rat).